The following is a 280-amino-acid chain: Elongation factor Ts (280 aa).

An involved in Mg(2+) ion dislocation from EF-Tu region spans residues 79–82; that stretch reads TDFV.

This sequence belongs to the EF-Ts family.

The protein localises to the cytoplasm. Associates with the EF-Tu.GDP complex and induces the exchange of GDP to GTP. It remains bound to the aminoacyl-tRNA.EF-Tu.GTP complex up to the GTP hydrolysis stage on the ribosome. The sequence is that of Elongation factor Ts from Vibrio vulnificus (strain CMCP6).